Here is a 546-residue protein sequence, read N- to C-terminus: Probable protein kinase UbiB (546 aa).

The Protein kinase domain occupies 123–501 (DFDETPLASA…SRRQGQARYL (379 aa)). ATP contacts are provided by residues 129–137 (LASASIAQV) and Lys152. The active-site Proton acceptor is Asp287. The next 2 helical transmembrane spans lie at 498–517 (ARYL…FLLT) and 522–541 (IEWG…LGWL).

Belongs to the ABC1 family. UbiB subfamily.

It is found in the cell inner membrane. It functions in the pathway cofactor biosynthesis; ubiquinone biosynthesis [regulation]. Functionally, is probably a protein kinase regulator of UbiI activity which is involved in aerobic coenzyme Q (ubiquinone) biosynthesis. This is Probable protein kinase UbiB from Aeromonas hydrophila subsp. hydrophila (strain ATCC 7966 / DSM 30187 / BCRC 13018 / CCUG 14551 / JCM 1027 / KCTC 2358 / NCIMB 9240 / NCTC 8049).